The sequence spans 224 residues: Respiratory supercomplex factor 2, mitochondrial (224 aa).

At 1–13 (MKILTQDEIEAHR) the chain is on the mitochondrial intermembrane side. The helical transmembrane segment at 14–38 (SHTLKGGIEGALAGFAISAIIFKVL) threads the bilayer. At 39–47 (PRRYPKFKP) the chain is on the mitochondrial matrix side. Residues 48 to 75 (STLTWSIKTALWITPPTVLTAICAEEAS) traverse the membrane as a helical segment. Residues 76-103 (NNFDATMYGSGSSSEDALDEHRRWKSLS) lie on the Mitochondrial intermembrane side of the membrane. Residues 89–180 (SEDALDEHRR…YENKLHPNKQ (92 aa)) enclose the HIG1 domain. The chain crosses the membrane as a helical span at residues 104 to 133 (TKDKFVEGLSNNKYKIITGAWAASLYGSWV). Residues 134–142 (IVNKDPIMT) are Mitochondrial matrix-facing. Residues 143-173 (KAQKIVQARMYAQFITVGLLLASVGLSMYEN) form a helical membrane-spanning segment. The Mitochondrial intermembrane segment spans residues 174–184 (KLHPNKQKVNE). The helical transmembrane segment at 185–204 (MRRWENALRVAEEEERLEKE) threads the bilayer. Topologically, residues 205–224 (GRRTGYVSNEERINSKIFKS) are mitochondrial matrix.

In terms of assembly, associates with a subpopulation of the cytochrome bc1-cytochrome c oxidase supercomplexes. Associates in substoichiometric amounts with complex IV. Interacts with COX3.

It is found in the mitochondrion membrane. Functionally, assembly factor that plays a role in the assembly of the respiratory chain supercomplexes (SCs) composed of ubiquinol-cytochrome c oxidoreductase (cytochrome b-c1 complex, complex III, CIII) and cytochrome c oxidase (complex IV, CIV). May be required for late-stage assembly of the COX12 and COX13 subunits. Required for the generation and maintenance of a normal proton motive force (PMF) across the inner mitochondrial membrane (IMM) by preventing proton leakage through an inactive population of CIV that accumulates when RCF1 and/or RCF2 proteins are absent. In Saccharomyces cerevisiae (strain ATCC 204508 / S288c) (Baker's yeast), this protein is Respiratory supercomplex factor 2, mitochondrial (RCF2).